We begin with the raw amino-acid sequence, 139 residues long: Putative pre-16S rRNA nuclease (139 aa).

The protein belongs to the YqgF nuclease family.

It localises to the cytoplasm. In terms of biological role, could be a nuclease involved in processing of the 5'-end of pre-16S rRNA. This Rippkaea orientalis (strain PCC 8801 / RF-1) (Cyanothece sp. (strain PCC 8801)) protein is Putative pre-16S rRNA nuclease.